A 122-amino-acid polypeptide reads, in one-letter code: Large ribosomal subunit protein uL14 (122 aa).

Belongs to the universal ribosomal protein uL14 family. Part of the 50S ribosomal subunit. Forms a cluster with proteins L3 and L19. In the 70S ribosome, L14 and L19 interact and together make contacts with the 16S rRNA in bridges B5 and B8.

Its function is as follows. Binds to 23S rRNA. Forms part of two intersubunit bridges in the 70S ribosome. This chain is Large ribosomal subunit protein uL14, found in Exiguobacterium sp. (strain ATCC BAA-1283 / AT1b).